We begin with the raw amino-acid sequence, 263 residues long: HTH-type transcriptional repressor NanR (263 aa).

A disordered region spans residues 1 to 24 (MSPMNAFDSQTEDSSPAIGRNLRS). Positions 30–98 (KKLSEMVEEE…NGERARVSRP (69 aa)) constitute an HTH gntR-type domain. The H-T-H motif DNA-binding region spans 58 to 77 (ERELMAFFNVGRPSVREALA).

This sequence belongs to the NanR family.

Functionally, transcriptional repressor that controls expression of the genes required for the catabolism of sialic acids. The sequence is that of HTH-type transcriptional repressor NanR from Escherichia coli O127:H6 (strain E2348/69 / EPEC).